Consider the following 290-residue polypeptide: Ribosomal RNA small subunit methyltransferase A (290 aa).

S-adenosyl-L-methionine is bound by residues asparagine 27, leucine 29, glycine 54, glutamate 75, aspartate 100, and asparagine 125.

The protein belongs to the class I-like SAM-binding methyltransferase superfamily. rRNA adenine N(6)-methyltransferase family. RsmA subfamily.

Its subcellular location is the cytoplasm. It catalyses the reaction adenosine(1518)/adenosine(1519) in 16S rRNA + 4 S-adenosyl-L-methionine = N(6)-dimethyladenosine(1518)/N(6)-dimethyladenosine(1519) in 16S rRNA + 4 S-adenosyl-L-homocysteine + 4 H(+). Functionally, specifically dimethylates two adjacent adenosines (A1518 and A1519) in the loop of a conserved hairpin near the 3'-end of 16S rRNA in the 30S particle. May play a critical role in biogenesis of 30S subunits. The protein is Ribosomal RNA small subunit methyltransferase A of Streptococcus pyogenes serotype M5 (strain Manfredo).